The sequence spans 583 residues: MSQVIEPQLDRTTYYSILGLTSNATSSEVHKSYLKLARLLHPDKTKSDKSEELFKAVVHAHSILTDEDQKLRYDRDLKIKGLHTYQPKKNCHIFKTKAKESQGASPTLGQSEAYHRQNKPYEQQPYGFGVGKKMTSSSKSKVPIFKSFNLKSYQRNHYYSSKKERKHGSPDIDSLFHETNGASKVRMTDAGKMDTNSQFQEIWEILGKNAYTHKSYSEDPNSCLGSALSDHEEEEEAGKQQQQQQQQQQQQQHYGMTSKSSSPDEEKKNNKEPKRESRVSPEENGEEETGHKQFKLPKTSTFSSGSHDSNLQSPFYNHEYRHYARSKFECKNQFRKSVSPIKEIPATTSANEGWNILRDIIEKLNISNVDDRNKDLLFRRDEIGDKNHSDSIDIENLSIKEPKGMKRRKKDDISLEELFQSLPREKDYFMMDAINDSLESINLFKKPKTTQSHEQGGTFAQAESNRAKFKPLLEQCGITPEILDLEIPEIPEFDAVADLETLKLNVQLFNNQCNKLKETIHQVSLQRLRADTQFSDMLTQKQSIMVWKTYLEFDKSLMDKLNILQERQMQVIKIFSERCDGKV.

A J domain is found at 11-79 (RTTYYSILGL…KLRYDRDLKI (69 aa)). Residues 215 to 224 (SYSEDPNSCL) are compositionally biased toward polar residues. Residues 215–313 (SYSEDPNSCL…SGSHDSNLQS (99 aa)) are disordered. Residue Ser229 is modified to Phosphoserine. The segment covering 240–252 (QQQQQQQQQQQQQ) has biased composition (low complexity). Basic and acidic residues predominate over residues 262–281 (SPDEEKKNNKEPKRESRVSP). Residues 298–313 (KTSTFSSGSHDSNLQS) show a composition bias toward polar residues.

The protein resides in the cytoplasm. Its subcellular location is the nucleus. The polypeptide is J protein JJJ2 (JJJ2) (Saccharomyces cerevisiae (strain ATCC 204508 / S288c) (Baker's yeast)).